The primary structure comprises 637 residues: Putative pentatricopeptide repeat-containing protein At5g65820 (637 aa).

PPR repeat units follow at residues 146 to 180, 182 to 216, 217 to 247, 251 to 285, 286 to 320, 321 to 355, 356 to 390, 391 to 425, 426 to 460, 461 to 495, 498 to 532, and 534 to 568; these read SIEV…NPQL, EPEL…GFEP, DEYV…MRMR, NLRY…GFEP, DIVD…GFEP, NANC…ECEA, DVVT…GLMP, SELT…EYHP, DIGI…GLSP, GVDT…GLFS, QYGT…GACE, and NVLS…DFMP. Over residues 616-630 the composition is skewed to basic and acidic residues; it reads QDLTEKAKSKQDREG. Residues 616-637 form a disordered region; the sequence is QDLTEKAKSKQDREGKKKQRSR.

It belongs to the PPR family. P subfamily.

The polypeptide is Putative pentatricopeptide repeat-containing protein At5g65820 (Arabidopsis thaliana (Mouse-ear cress)).